The sequence spans 25 residues: Nicotinic acetylcholine receptor-binding protein Mnn-4 (25 aa).

Cys-3 and Cys-20 are oxidised to a cystine.

The protein belongs to the three-finger toxin family. Short-chain subfamily. As to expression, expressed by the venom gland.

Its subcellular location is the secreted. In terms of biological role, binds and may inhibit nicotinic acetylcholine receptors (nAChR). The polypeptide is Nicotinic acetylcholine receptor-binding protein Mnn-4 (Micrurus nigrocinctus (Central American coral snake)).